The following is a 904-amino-acid chain: DNA mismatch repair protein MutS (904 aa).

655-662 (GPNMGGKS) contributes to the ATP binding site.

This sequence belongs to the DNA mismatch repair MutS family.

Functionally, this protein is involved in the repair of mismatches in DNA. It is possible that it carries out the mismatch recognition step. This protein has a weak ATPase activity. The chain is DNA mismatch repair protein MutS from Rhizorhabdus wittichii (strain DSM 6014 / CCUG 31198 / JCM 15750 / NBRC 105917 / EY 4224 / RW1) (Sphingomonas wittichii).